Consider the following 352-residue polypeptide: (2E,6E)-farnesyl diphosphate synthase (352 aa).

The isopentenyl diphosphate site is built by Lys-43, Arg-46, and His-77. The Mg(2+) site is built by Asp-84 and Asp-88. A DDXXD motif motif is present at residues 84 to 88 (DDLID). Residue Arg-94 coordinates isopentenyl diphosphate. The DDXXD motif signature appears at 236 to 240 (DDVLG).

Belongs to the FPP/GGPP synthase family. Requires Mg(2+) as cofactor.

The catalysed reaction is isopentenyl diphosphate + dimethylallyl diphosphate = (2E)-geranyl diphosphate + diphosphate. The enzyme catalyses isopentenyl diphosphate + (2E)-geranyl diphosphate = (2E,6E)-farnesyl diphosphate + diphosphate. It participates in isoprenoid biosynthesis; geranyl diphosphate biosynthesis; geranyl diphosphate from dimethylallyl diphosphate and isopentenyl diphosphate: step 1/1. It functions in the pathway isoprenoid biosynthesis; farnesyl diphosphate biosynthesis; farnesyl diphosphate from geranyl diphosphate and isopentenyl diphosphate. Catalyzes the sequential condensations of isopentenyl pyrophosphate (IPP) with dimethylallyl diphosphate (DMAPP) to yield geranyl diphosphate (GPP) and with GPP to yield (2E,6E)-farnesyl diphosphate (E,E-FPP). In Mycobacterium tuberculosis (strain ATCC 25618 / H37Rv), this protein is (2E,6E)-farnesyl diphosphate synthase.